The chain runs to 166 residues: Peptidoglycan-associated lipoprotein (166 aa).

Positions 1-21 (MEMLKFGKFAALALAMAVAVG) are cleaved as a signal peptide. C22 carries the N-palmitoyl cysteine lipid modification. The S-diacylglycerol cysteine moiety is linked to residue C22. The OmpA-like domain maps to 54–166 (SEEAALRAIT…AQNRRVELRK (113 aa)). Residues 147–166 (VATGNDEQSWAQNRRVELRK) are disordered.

The protein belongs to the Pal lipoprotein family. The Tol-Pal system is composed of five core proteins: the inner membrane proteins TolA, TolQ and TolR, the periplasmic protein TolB and the outer membrane protein Pal. They form a network linking the inner and outer membranes and the peptidoglycan layer.

Its subcellular location is the cell outer membrane. Functionally, part of the Tol-Pal system, which plays a role in outer membrane invagination during cell division and is important for maintaining outer membrane integrity. This is Peptidoglycan-associated lipoprotein from Pseudomonas putida (Arthrobacter siderocapsulatus).